The following is a 177-amino-acid chain: Large ribosomal subunit protein uL6 (177 aa).

Belongs to the universal ribosomal protein uL6 family. As to quaternary structure, part of the 50S ribosomal subunit.

This protein binds to the 23S rRNA, and is important in its secondary structure. It is located near the subunit interface in the base of the L7/L12 stalk, and near the tRNA binding site of the peptidyltransferase center. In Bordetella bronchiseptica (strain ATCC BAA-588 / NCTC 13252 / RB50) (Alcaligenes bronchisepticus), this protein is Large ribosomal subunit protein uL6.